Here is a 342-residue protein sequence, read N- to C-terminus: Ferredoxin--NADP reductase (342 aa).

Positions 17, 36, 44, 49, 89, 124, 289, and 330 each coordinate FAD.

It belongs to the ferredoxin--NADP reductase type 2 family. Homodimer. The cofactor is FAD.

It carries out the reaction 2 reduced [2Fe-2S]-[ferredoxin] + NADP(+) + H(+) = 2 oxidized [2Fe-2S]-[ferredoxin] + NADPH. The sequence is that of Ferredoxin--NADP reductase from Nitrobacter hamburgensis (strain DSM 10229 / NCIMB 13809 / X14).